The sequence spans 344 residues: Methionine import ATP-binding protein MetN (344 aa).

An ABC transporter domain is found at 2-241 (IEIRNLSQRF…PHHEVTRALI (240 aa)). 38 to 45 (GRSGAGKS) is a binding site for ATP.

The protein belongs to the ABC transporter superfamily. Methionine importer (TC 3.A.1.24) family. In terms of assembly, the complex is composed of two ATP-binding proteins (MetN), two transmembrane proteins (MetI) and a solute-binding protein (MetQ).

The protein resides in the cell inner membrane. The catalysed reaction is L-methionine(out) + ATP + H2O = L-methionine(in) + ADP + phosphate + H(+). It catalyses the reaction D-methionine(out) + ATP + H2O = D-methionine(in) + ADP + phosphate + H(+). Part of the ABC transporter complex MetNIQ involved in methionine import. Responsible for energy coupling to the transport system. The chain is Methionine import ATP-binding protein MetN from Burkholderia thailandensis (strain ATCC 700388 / DSM 13276 / CCUG 48851 / CIP 106301 / E264).